We begin with the raw amino-acid sequence, 406 residues long: Nicotinate phosphoribosyltransferase (406 aa).

H226 is subject to Phosphohistidine; by autocatalysis.

It belongs to the NAPRTase family. In terms of processing, transiently phosphorylated on a His residue during the reaction cycle. Phosphorylation strongly increases the affinity for substrates and increases the rate of nicotinate D-ribonucleotide production. Dephosphorylation regenerates the low-affinity form of the enzyme, leading to product release.

It catalyses the reaction nicotinate + 5-phospho-alpha-D-ribose 1-diphosphate + ATP + H2O = nicotinate beta-D-ribonucleotide + ADP + phosphate + diphosphate. It participates in cofactor biosynthesis; NAD(+) biosynthesis; nicotinate D-ribonucleotide from nicotinate: step 1/1. Its function is as follows. Catalyzes the synthesis of beta-nicotinate D-ribonucleotide from nicotinate and 5-phospho-D-ribose 1-phosphate at the expense of ATP. In Verminephrobacter eiseniae (strain EF01-2), this protein is Nicotinate phosphoribosyltransferase.